Here is a 385-residue protein sequence, read N- to C-terminus: Cotranscriptional regulator ARB2A homolog (385 aa).

Disordered stretches follow at residues 1–65 (MSDI…NGEE) and 220–239 (EEQK…NGKL). Residues 52-62 (NNNNNNSNNSN) are compositionally biased toward low complexity. Over residues 220–238 (EEQKEKAKEEEEKKDDNGK) the composition is skewed to basic and acidic residues.

It belongs to the ARB2A family.

The polypeptide is Cotranscriptional regulator ARB2A homolog (Dictyostelium discoideum (Social amoeba)).